Consider the following 185-residue polypeptide: Ribosome-recycling factor (185 aa).

It belongs to the RRF family.

It is found in the cytoplasm. In terms of biological role, responsible for the release of ribosomes from messenger RNA at the termination of protein biosynthesis. May increase the efficiency of translation by recycling ribosomes from one round of translation to another. This chain is Ribosome-recycling factor, found in Streptococcus mutans serotype c (strain ATCC 700610 / UA159).